The sequence spans 927 residues: Ribosome-releasing factor 2, mitochondrial (927 aa).

A mitochondrion-targeting transit peptide spans 1–57 (MVTAPLLGWVAVRPIPRLSKLNTCKYVSSSLQSYKRSVGSCLGKQQSRDFSYSATLT). The tr-type G domain occupies 64–379 (EKTRNIGIIA…AVNNLLPGPS (316 aa)). GTP is bound by residues 73-80 (AHIDAGKT), 163-167 (DTPGH), and 217-220 (NKLD).

This sequence belongs to the TRAFAC class translation factor GTPase superfamily. Classic translation factor GTPase family. EF-G/EF-2 subfamily.

It localises to the mitochondrion. In terms of biological role, mitochondrial GTPase that mediates the disassembly of ribosomes from messenger RNA at the termination of mitochondrial protein biosynthesis. Not involved in the GTP-dependent ribosomal translocation step during translation elongation. In Talaromyces marneffei (strain ATCC 18224 / CBS 334.59 / QM 7333) (Penicillium marneffei), this protein is Ribosome-releasing factor 2, mitochondrial (mef2).